Consider the following 714-residue polypeptide: MFETHKVEIEWAGRPLKLETGKIARQADGAVLATYGETVVLATVVSAKAPKPGQDFFPLTVNYQEKTYAAGKIPGGYFKREGRPSENETLVSRLIDRPIRPLFPEGYKNDTQVIITVMQHDLENNPDVVAMVAASAALTLSGVPFMGPVGGARVGYINGEYVLNPHLDEMDESTLDLVVAGTQDAVLMVESEAKELSEEIMLGAVVFGQKGFQPVIDAVIRLAEVAAKEPREFEPDDHSALENAMLSIAEEDLRKAYKITEKAQRYAAVDAVKAKVKEHFLPEGVENPAHTAEEIASVFKHLQAKIVRWNILDTKSRIDGRDLVTVRPIVAEVGLLPRTHGSALFTRGETQAIVVATLGTGEDEQYVDSLTGMYKENFMLHYNFPPYSVGETGRMGSPGRREIGHGKLAWRAIHPMLPTAEQFPYTLRVVSEITESNGSSSMATVCGTSLALMDAGVPLAKPVAGIAMGLIKEDDRFAVLSDILGDEDHLGDMDFKVAGTEAGVTSLQMDIKIAGITEEIMKVALDQAKHGRVHILGEMAKAISESRGQLGEFAPRIEVMNIPVDKIREVIGSGGKVIREIVEKTGAKINIDDDGTVKIASASGKEIEAARKWIHSIVAEPEVGQVYEGTVVKTADFGAFVNFFGARDGLVHISQLASERVAKTTDVVKEGDKVWVKLMGFDERGKVRLSMKVVDQATGKEIAAEKKDGGEAAE.

2 residues coordinate Mg(2+): D488 and D494. The KH domain maps to 555 to 614 (PRIEVMNIPVDKIREVIGSGGKVIREIVEKTGAKINIDDDGTVKIASASGKEIEAARKWI). Residues 624-692 (GQVYEGTVVK…ERGKVRLSMK (69 aa)) enclose the S1 motif domain.

The protein belongs to the polyribonucleotide nucleotidyltransferase family. Mg(2+) is required as a cofactor.

It is found in the cytoplasm. The enzyme catalyses RNA(n+1) + phosphate = RNA(n) + a ribonucleoside 5'-diphosphate. Its function is as follows. Involved in mRNA degradation. Catalyzes the phosphorolysis of single-stranded polyribonucleotides processively in the 3'- to 5'-direction. The polypeptide is Polyribonucleotide nucleotidyltransferase (Sinorhizobium medicae (strain WSM419) (Ensifer medicae)).